Here is a 288-residue protein sequence, read N- to C-terminus: Oxaloacetate decarboxylase (288 aa).

A substrate-binding site is contributed by S47. D85 contacts Mg(2+). 2 residues coordinate substrate: R156 and H232.

It belongs to the isocitrate lyase/PEP mutase superfamily. Oxaloacetate decarboxylase family. Homotetramer; dimer of dimers. Requires Mg(2+) as cofactor.

The catalysed reaction is oxaloacetate + H(+) = pyruvate + CO2. Its function is as follows. Catalyzes the decarboxylation of oxaloacetate into pyruvate. Seems to play a role in maintaining cellular concentrations of bicarbonate and pyruvate. The polypeptide is Oxaloacetate decarboxylase (Rhodopseudomonas palustris (strain ATCC BAA-98 / CGA009)).